Consider the following 238-residue polypeptide: Ribonuclease PH (238 aa).

Phosphate is bound by residues Arg86 and 124 to 126 (GTR).

This sequence belongs to the RNase PH family. As to quaternary structure, homohexameric ring arranged as a trimer of dimers.

The catalysed reaction is tRNA(n+1) + phosphate = tRNA(n) + a ribonucleoside 5'-diphosphate. Phosphorolytic 3'-5' exoribonuclease that plays an important role in tRNA 3'-end maturation. Removes nucleotide residues following the 3'-CCA terminus of tRNAs; can also add nucleotides to the ends of RNA molecules by using nucleoside diphosphates as substrates, but this may not be physiologically important. Probably plays a role in initiation of 16S rRNA degradation (leading to ribosome degradation) during starvation. This chain is Ribonuclease PH, found in Haemophilus influenzae (strain PittGG).